Consider the following 498-residue polypeptide: MTALFPFDNSFARLPDRFFARVAPTAVEAPRLVRLNRTLALDLGLDPDRLESPEGLDVLSGRRVAEGAEPLAAAYAGHQFGQFVPQLGDGRAILLGEVVGRDGRRRDIQLKGSGPTPFSRRGDGRAALGPVLREYLVSEAMHALGIPTTRALAAVTTGEPVIRETVLPGAVLTRVASSHIRVGSFQFFAARGDVEGLRALADHAIARHDPEAAEAENPYRALLEGVIRRQAELVARWLGIGFIHGVMNTDNMSIAGETIDYGPCAFLDAYDPATAFSSIDRHGRYAYGNQPRIALWNLTRLAEALLPLLSEDETKAVAEAEAALTGFAGLFEAAYHGLLNRKLGLTTMRDGDPALAGDLLKTMAENGADFTLTFRRLSAAAPGSGPAPEPEAVEAVRSLFIDPTSFDAWAERWRRRLDEEPGSAAGRKALMRSVNPAFIPRNHRVEAMIEAAVERQDFVPFETLLTVLSRPYDDQPDFAQFAEAPEGGGRGYRTFCGT.

Residues Gly88, Gly90, Arg91, Lys111, Asp123, Gly124, Arg174, and Arg181 each coordinate ATP. Catalysis depends on Asp250, which acts as the Proton acceptor. Positions 251 and 260 each coordinate Mg(2+). Asp260 lines the ATP pocket.

Belongs to the SELO family. It depends on Mg(2+) as a cofactor. Mn(2+) is required as a cofactor.

It catalyses the reaction L-seryl-[protein] + ATP = 3-O-(5'-adenylyl)-L-seryl-[protein] + diphosphate. The catalysed reaction is L-threonyl-[protein] + ATP = 3-O-(5'-adenylyl)-L-threonyl-[protein] + diphosphate. The enzyme catalyses L-tyrosyl-[protein] + ATP = O-(5'-adenylyl)-L-tyrosyl-[protein] + diphosphate. It carries out the reaction L-histidyl-[protein] + UTP = N(tele)-(5'-uridylyl)-L-histidyl-[protein] + diphosphate. It catalyses the reaction L-seryl-[protein] + UTP = O-(5'-uridylyl)-L-seryl-[protein] + diphosphate. The catalysed reaction is L-tyrosyl-[protein] + UTP = O-(5'-uridylyl)-L-tyrosyl-[protein] + diphosphate. Its function is as follows. Nucleotidyltransferase involved in the post-translational modification of proteins. It can catalyze the addition of adenosine monophosphate (AMP) or uridine monophosphate (UMP) to a protein, resulting in modifications known as AMPylation and UMPylation. In Methylorubrum populi (strain ATCC BAA-705 / NCIMB 13946 / BJ001) (Methylobacterium populi), this protein is Protein nucleotidyltransferase YdiU.